We begin with the raw amino-acid sequence, 209 residues long: Molybdenum cofactor guanylyltransferase (209 aa).

GTP-binding positions include 14-16 (LAG), K31, and D104. A Mg(2+)-binding site is contributed by D104.

Belongs to the MobA family. In terms of assembly, monomer. Mg(2+) serves as cofactor.

Its subcellular location is the cytoplasm. The catalysed reaction is Mo-molybdopterin + GTP + H(+) = Mo-molybdopterin guanine dinucleotide + diphosphate. In terms of biological role, transfers a GMP moiety from GTP to Mo-molybdopterin (Mo-MPT) cofactor (Moco or molybdenum cofactor) to form Mo-molybdopterin guanine dinucleotide (Mo-MGD) cofactor. This Helicobacter pylori (strain J99 / ATCC 700824) (Campylobacter pylori J99) protein is Molybdenum cofactor guanylyltransferase.